The chain runs to 383 residues: tRNA-specific 2-thiouridylase MnmA (383 aa).

ATP-binding positions include 29–36 (GMSGGVDS) and M55. The segment at 115 to 117 (NPD) is interaction with target base in tRNA. The active-site Nucleophile is the C120. Residues C120 and C217 are joined by a disulfide bond. Residue G145 coordinates ATP. Positions 167–169 (KDQ) are interaction with tRNA. C217 (cysteine persulfide intermediate) is an active-site residue. The interaction with tRNA stretch occupies residues 329–330 (RY).

This sequence belongs to the MnmA/TRMU family.

It localises to the cytoplasm. It carries out the reaction S-sulfanyl-L-cysteinyl-[protein] + uridine(34) in tRNA + AH2 + ATP = 2-thiouridine(34) in tRNA + L-cysteinyl-[protein] + A + AMP + diphosphate + H(+). Functionally, catalyzes the 2-thiolation of uridine at the wobble position (U34) of tRNA, leading to the formation of s(2)U34. The chain is tRNA-specific 2-thiouridylase MnmA from Pasteurella multocida (strain Pm70).